The chain runs to 142 residues: Relaxin-3 (142 aa).

The N-terminal stretch at 1–25 (MARYKLLLLLAVWVLTGELWPGAEA) is a signal peptide. Disulfide bonds link Cys-35–Cys-129, Cys-47–Cys-142, and Cys-128–Cys-133. The propeptide at 55–118 (SDILAHEAMG…GTPGALRGSR (64 aa)) is connecting peptide.

This sequence belongs to the insulin family. In terms of assembly, heterodimer of a B chain and an A chain linked by two disulfide bonds.

Its subcellular location is the secreted. May play a role in neuropeptide signaling processes. Ligand for LGR7, RXFP3 and RXFP4. This is Relaxin-3 (RLN3) from Pan troglodytes (Chimpanzee).